The following is an 87-amino-acid chain: Toxin ICK-42 (87 aa).

The signal sequence occupies residues 1–19 (MKPIVYMLLFCAFTVVILG). Intrachain disulfides connect Cys-40-Cys-54, Cys-40-Cys-77, Cys-53-Cys-66, and Cys-80-Cys-87.

This sequence belongs to the neurotoxin 27 (Jztx-72) family. ICK-41 subfamily. As to expression, expressed by the venom gland.

The protein resides in the secreted. Probable neurotoxin with ion channel impairing activity. The protein is Toxin ICK-42 of Trittame loki (Brush-footed trapdoor spider).